Here is a 91-residue protein sequence, read N- to C-terminus: Small ribosomal subunit protein bS18 (91 aa).

The disordered stretch occupies residues 1 to 21; sequence MSDERTPQRSSGPRKKRPFQR. Basic residues predominate over residues 12–21; that stretch reads GPRKKRPFQR.

This sequence belongs to the bacterial ribosomal protein bS18 family. In terms of assembly, part of the 30S ribosomal subunit. Forms a tight heterodimer with protein bS6.

In terms of biological role, binds as a heterodimer with protein bS6 to the central domain of the 16S rRNA, where it helps stabilize the platform of the 30S subunit. The sequence is that of Small ribosomal subunit protein bS18 from Geotalea uraniireducens (strain Rf4) (Geobacter uraniireducens).